The primary structure comprises 214 residues: Calcineurin B homologous protein 3 (214 aa).

A lipid anchor (N-myristoyl glycine) is attached at Gly-2. Positions 110 to 145 (FRKEKLKFLFHMYDADYDGIITLQEYKNVLDELMSG) constitute an EF-hand domain. 4 residues coordinate Ca(2+): Asp-123, Asp-125, Asp-127, and Glu-134.

The protein belongs to the calcineurin regulatory subunit family. CHP subfamily. As to quaternary structure, monomer. Homodimer. As to expression, expressed in the bipotential gonad by E4.5 and expressed in both the testis and ovary by E5.5, but with expression higher in the testis. Expressed in the testis cords but also at low levels in the interstitium. In the ovary, expression is principally in the ovarian cortex, but also in the medulla. Also expressed in the embryonic brain, with expression highest in the region between the nasal placode and olfactory bulb. Also expressed in the embryonic heart and tail.

It localises to the nucleus. It is found in the cytoplasm. Its subcellular location is the membrane. The protein localises to the cell membrane. The protein resides in the cell projection. It localises to the lamellipodium. It is found in the ruffle membrane. Its function is as follows. Functions as an integral cofactor in cell pH regulation by controlling plasma membrane-type Na(+)/H(+) exchange activity. Promotes the induction of hematopoietic stem cell differentiation toward megakaryocytic lineage. Essential for the coupling of ERK cascade activation with the expression of ETS family genes in megakaryocytic differentiation. Also involved in granulocytic differentiation in a ERK-dependent manner. Inhibits the phosphatase activity of calcineurin. The protein is Calcineurin B homologous protein 3 of Gallus gallus (Chicken).